We begin with the raw amino-acid sequence, 174 residues long: Isomerase prhC (174 aa).

This sequence belongs to the trt14 isomerase family. Homodimer.

It functions in the pathway secondary metabolite biosynthesis; terpenoid biosynthesis. Isomerase; part of the gene cluster that mediates the biosynthesis of paraherquonin, a meroterpenoid with a unique, highly congested hexacyclic molecular architecture. The first step of the pathway is the synthesis of 3,5-dimethylorsellinic acid (DMOA) by the polyketide synthase prhL. Synthesis of DMOA is followed by farnesylation by the prenyltransferase prhE, methylesterification by the methyl-transferase prhM, epoxidation of the prenyl chain by the flavin-dependent monooxygenase prhF, and cyclization of the farnesyl moiety by the terpene cyclase prhH, to yield the tetracyclic intermediate, protoaustinoid A. The short chain dehydrogenase prhI then oxidizes the C-3 alcohol group of the terpene cyclase product to transform protoaustinoid A into protoaustinoid B. The FAD-binding monooxygenase prhJ catalyzes the oxidation of protoaustinoid B into preaustinoid A which is further oxidized into preaustinoid A1 by FAD-binding monooxygenase phrK. Finally, prhA leads to berkeleydione via the berkeleyone B intermediate. PrhA is a multifunctional dioxygenase that first desaturates at C5-C6 to form berkeleyone B, followed by rearrangement of the A/B-ring to form the cycloheptadiene moiety in berkeleydione. Berkeleydione serves as the key intermediate for the biosynthesis of paraherquonin as well as many other meroterpenoids. The cytochrome P450 monooxygenases prhB, prhD, and prhN, as well as the isomerase prhC, are probably involved in the late stage of paraherquonin biosynthesis, after the production of berkeleydione. Especially prhC might be a multifunctional enzyme that catalyzes the D-ring expansion via intramolecular methoxy rearrangement, as well as the hydrolysis of the expanded D-ring. The sequence is that of Isomerase prhC from Penicillium brasilianum.